We begin with the raw amino-acid sequence, 1641 residues long: Lysine-specific demethylase 6B (1641 aa).

Disordered stretches follow at residues 42–89 (LPGG…LHGK), 188–682 (YGAK…PLED), 704–808 (LDES…LLKS), and 824–1085 (GAAV…VSRA). A compositionally biased stretch (low complexity) spans 214 to 223 (LSGPSGEEGL). Phosphoserine is present on Ser-224. A compositionally biased stretch (pro residues) spans 242–268 (PGLPLPPPPPPPPPPPPPPPPPPPPLP). The segment covering 293 to 309 (GPERKGSAPPERQEQRH) has biased composition (basic and acidic residues). Low complexity predominate over residues 312 to 326 (PHSYPYPAPAYSAHP). Over residues 361-372 (DLRESRVQRSRM) the composition is skewed to basic and acidic residues. Positions 396–415 (PGTSSSSSSSSSSNNTGLRG) are enriched in low complexity. Residues 467–488 (PGTPSSPPPPCPRLLRPPPPPA) show a composition bias toward pro residues. Over residues 552–568 (TTTSSSSSSNSHSSSPT) the composition is skewed to low complexity. Pro residues-rich tracts occupy residues 597–613 (QDPPLPPLTLALPPAPP) and 645–660 (GPPPGPVSKAPQPVPP). A compositionally biased stretch (basic and acidic residues) spans 704 to 713 (LDESIRKEEE). Low complexity predominate over residues 743–766 (TAPATTTAAPTTATTTTTTTTTTT). Residues 774-801 (PPALPPPPPLAKFPPPPQPQPPPPPPAS) show a composition bias toward pro residues. A compositionally biased stretch (low complexity) spans 855–879 (VAPSAQGSPKPSVSSSSQFSTSGGP). The span at 891-908 (APGPVTPAQLPPPLPLPP) shows a compositional bias: pro residues. Residues 918-931 (EISRACETLVERVG) show a composition bias toward basic and acidic residues. The segment covering 974-987 (GKRRQKEHRRHRRA) has biased composition (basic residues). A compositionally biased stretch (basic and acidic residues) spans 988–1001 (CRDSVGRRPREGRA). The span at 1002-1014 (KAKAKAPKEKSRR) shows a compositional bias: basic residues. Positions 1047–1066 (APAPPPAPAPAAQPTPPSAP) are enriched in pro residues. Lys-1107 participates in a covalent cross-link: Glycyl lysine isopeptide (Lys-Gly) (interchain with G-Cter in SUMO2). The disordered stretch occupies residues 1286-1323 (FQESLQEERESEDEESEEPDSTTGTSPSSAPDPKNHHI). A compositionally biased stretch (acidic residues) spans 1294–1305 (RESEDEESEEPD). The span at 1306–1317 (STTGTSPSSAPD) shows a compositional bias: low complexity. A JmjC domain is found at 1337–1500 (RWKPQLQELL…YQLALERYEW (164 aa)). Residues His-1388, Glu-1390, and His-1468 each coordinate Fe cation. The Zn(2+) site is built by Cys-1573, Cys-1576, Cys-1600, and Cys-1603.

This sequence belongs to the UTX family. Interacts with TLE1. Component of the MLL4 complex, at least composed of KMT2B/MLL4, ASH2L, RBBP5, WDR5, and KDM6B. Interacts with TBX21, SMARCA4, SMARCC1 and SMARCC2. L-ascorbate serves as cofactor. It depends on Fe(2+) as a cofactor.

It is found in the nucleus. It carries out the reaction N(6),N(6),N(6)-trimethyl-L-lysyl(27)-[histone H3] + 2 2-oxoglutarate + 2 O2 = N(6)-methyl-L-lysyl(27)-[histone H3] + 2 formaldehyde + 2 succinate + 2 CO2. Histone demethylase that specifically demethylates 'Lys-27' of histone H3, thereby playing a central role in histone code. Demethylates trimethylated and dimethylated H3 'Lys-27'. Plays a central role in regulation of posterior development, by regulating HOX gene expression. Involved in inflammatory response by participating in macrophage differentiation in case of inflammation by regulating gene expression and macrophage differentiation. Plays a demethylase-independent role in chromatin remodeling to regulate T-box family member-dependent gene expression by acting as a link between T-box factors and the SMARCA4-containing SWI/SNF remodeling complex. This chain is Lysine-specific demethylase 6B (Kdm6b), found in Mus musculus (Mouse).